Consider the following 667-residue polypeptide: Tripartite terminase subunit 3 (667 aa).

The short motif at 208 to 215 (VPRRHGKT) is the Walker A motif element. A Walker B motif motif is present at residues 301–306 (LLIVDE). E306 functions as the For ATPase activity in the catalytic mechanism. Catalysis depends on for nuclease activity residues D459, E530, and D644.

The protein belongs to the herpesviridae TRM3 protein family. As to quaternary structure, interacts with the terminase subunits TRM1 and TRM2. Interacts with portal protein.

The protein localises to the host nucleus. Functionally, component of the molecular motor that translocates viral genomic DNA in empty capsid during DNA packaging. Forms a tripartite terminase complex together with TRM1 and TRM2 in the host cytoplasm. Once the complex reaches the host nucleus, it interacts with the capsid portal vertex. This portal forms a ring in which genomic DNA is translocated into the capsid. TRM3 carries an RNase H-like nuclease activity that plays an important role for the cleavage of concatemeric viral DNA into unit length genomes. The sequence is that of Tripartite terminase subunit 3 from Human herpesvirus 6A (strain Uganda-1102) (HHV-6 variant A).